A 479-amino-acid chain; its full sequence is Adenylate kinase 8 (479 aa).

2 adenylate kinase regions span residues 58 to 258 (PRVV…TYVQ) and 269 to 471 (PKVL…SGII). 67–72 (ASGKTT) contacts ATP. Positions 87 to 113 (TKENLLEREFSLLSLEAKKHYQVYKRV) are NMP 1. Residues 140-143 (GIPE), glutamine 147, and arginine 203 contribute to the AMP site. An LID 1 region spans residues 177–206 (GKRIDPVTGEIYHTTFDWPPELEIQNRLIQ). 278–283 (GCGKKL) contacts ATP. The segment at 298-327 (SCGQLLKEAMAAESSLGDLIEPFFEKRMTV) is NMP 2. AMP is bound by residues 325–327 (MTV), 354–357 (GFPR), and glutamine 361. Positions 391–424 (LRRTDPVTGERFHLMYKPPPTIEVQARLLQNPKD) are LID 2. Arginine 392 serves as a coordination point for ATP.

It belongs to the adenylate kinase family. Interacts with CFAP45 and CFAP52; CFAP45 and AK8 dimerization may create a cavity at the interface of the dimer that can accommodate AMP.

The protein localises to the cytoplasm. Its subcellular location is the cytosol. It localises to the cytoskeleton. It is found in the cilium axoneme. It carries out the reaction AMP + ATP = 2 ADP. The enzyme catalyses a 2'-deoxyribonucleoside 5'-diphosphate + ATP = a 2'-deoxyribonucleoside 5'-triphosphate + ADP. The catalysed reaction is a ribonucleoside 5'-diphosphate + ATP = a ribonucleoside 5'-triphosphate + ADP. Functionally, nucleoside monophosphate (NMP) kinase that catalyzes the reversible transfer of the terminal phosphate group between nucleoside triphosphates and monophosphates. Has highest activity toward AMP, and weaker activity toward dAMP, CMP and dCMP. Also displays broad nucleoside diphosphate kinase activity. This Rattus norvegicus (Rat) protein is Adenylate kinase 8 (Ak8).